The following is an 811-amino-acid chain: Lysine-specific histone demethylase 1 homolog 3 (811 aa).

Over residues 1-10 the composition is skewed to pro residues; that stretch reads MSDQPPPYTP. The interval 1 to 79 is disordered; that stretch reads MSDQPPPYTP…PSAQPPPRAS (79 aa). The segment covering 44-55 has biased composition (basic residues); it reads NKRKRTGFRRKL. The span at 56–71 shows a compositional bias: low complexity; that stretch reads PSGSPAAPVAVAASPS. Positions 88–189 constitute an SWIRM domain; that stretch reads NREPTAEAVT…FGVAPAIKER (102 aa). Positions 227, 229, 235, and 609 each coordinate FAD. A disordered region spans residues 790–811; the sequence is RNSSRTKTRPSKLKIGIPKSKS.

It belongs to the flavin monoamine oxidase family. Requires FAD as cofactor.

Probable histone demethylase. The sequence is that of Lysine-specific histone demethylase 1 homolog 3 from Oryza sativa subsp. indica (Rice).